We begin with the raw amino-acid sequence, 133 residues long: Large ribosomal subunit protein eL19 (133 aa).

Residues arginine 55–lysine 83 form a disordered region. A compositionally biased stretch (basic residues) spans alanine 60–lysine 83.

This sequence belongs to the eukaryotic ribosomal protein eL19 family. In terms of assembly, part of the 50S ribosomal subunit.

Binds to the 23S rRNA. The protein is Large ribosomal subunit protein eL19 of Korarchaeum cryptofilum (strain OPF8).